The chain runs to 204 residues: Sec-independent protein translocase protein TatB (204 aa).

A helical transmembrane segment spans residues 1–21; the sequence is MFDIGFSELLLIFIVGLVVLG. Polar residues predominate over residues 154–166; that stretch reads VVSSVDSIQNGQS. A disordered region spans residues 154–204; that stretch reads VVSSVDSIQNGQSDLELDAQAEVDRQLAAMMDKYAPPDDVAENPISTEKTS.

The protein belongs to the TatB family. As to quaternary structure, the Tat system comprises two distinct complexes: a TatABC complex, containing multiple copies of TatA, TatB and TatC subunits, and a separate TatA complex, containing only TatA subunits. Substrates initially bind to the TatABC complex, which probably triggers association of the separate TatA complex to form the active translocon.

It localises to the cell inner membrane. In terms of biological role, part of the twin-arginine translocation (Tat) system that transports large folded proteins containing a characteristic twin-arginine motif in their signal peptide across membranes. Together with TatC, TatB is part of a receptor directly interacting with Tat signal peptides. TatB may form an oligomeric binding site that transiently accommodates folded Tat precursor proteins before their translocation. The protein is Sec-independent protein translocase protein TatB of Mannheimia succiniciproducens (strain KCTC 0769BP / MBEL55E).